A 330-amino-acid chain; its full sequence is Stearoyl-CoA desaturase 5 (330 aa).

Residues 1–49 (MPGPATDAGKIPFCDAKEEIRAGLESSEGGGGPERPGARGQRQNIVWRN) lie on the Cytoplasmic side of the membrane. Position 49 (Asn-49) interacts with substrate. The chain crosses the membrane as a helical span at residues 50–70 (VVLMSLLHLGAVYSLVLIPKA). At 71–72 (KP) the chain is on the lumenal side. Residues 73 to 93 (LTLLWAYFCFLLAALGVTAGA) form a helical membrane-spanning segment. Fe cation-binding residues include His-94 and His-99. Residues 94-99 (HRLWSH) carry the Histidine box-1 motif. Topologically, residues 94–193 (HRLWSHRSYR…VVRIQRKYYK (100 aa)) are cytoplasmic. Asn-122, Arg-129, and Asp-130 together coordinate substrate. Fe cation is bound by residues His-131, His-134, and His-135. The Histidine box-2 signature appears at 131-135 (HRAHH). Substrate contacts are provided by Arg-162 and Lys-163. Residues 194–214 (ISVVLMCFVVPTLVPWYIWGE) form a helical membrane-spanning segment. Residue Ser-215 is a topological domain, lumenal. Residues 216-238 (LWNSYFLASILRYTISLNISWLV) traverse the membrane as a helical segment. Trp-236 provides a ligand contact to substrate. Topologically, residues 239–330 (NSAAHMYGNR…RKARTGDSSA (92 aa)) are cytoplasmic. Residues His-243, His-272, His-275, and His-276 each coordinate Fe cation. The short motif at 272 to 276 (HNYHH) is the Histidine box-3 element.

It belongs to the fatty acid desaturase type 1 family. As to quaternary structure, may self-associate and form homodimers. Fe(2+) serves as cofactor. As to expression, detected in fetal brain, and at lower levels in fetal kidney. Detected in adult brain and pancreas, and at lower levels in kidney and lung. Expressed in spiral ganglion cells and the organ of Corti of fetal cochlea.

The protein resides in the endoplasmic reticulum membrane. It carries out the reaction octadecanoyl-CoA + 2 Fe(II)-[cytochrome b5] + O2 + 2 H(+) = (9Z)-octadecenoyl-CoA + 2 Fe(III)-[cytochrome b5] + 2 H2O. The catalysed reaction is hexadecanoyl-CoA + 2 Fe(II)-[cytochrome b5] + O2 + 2 H(+) = (9Z)-hexadecenoyl-CoA + 2 Fe(III)-[cytochrome b5] + 2 H2O. Functionally, stearoyl-CoA desaturase that utilizes O(2) and electrons from reduced cytochrome b5 to introduce the first double bond into saturated fatty acyl-CoA substrates. Catalyzes the insertion of a cis double bond at the delta-9 position into fatty acyl-CoA substrates including palmitoyl-CoA and stearoyl-CoA. Gives rise to a mixture of 16:1 and 18:1 unsaturated fatty acids. Involved in neuronal cell proliferation and differentiation through down-regulation of EGFR/AKT/MAPK and Wnt signaling pathways. The protein is Stearoyl-CoA desaturase 5 (SCD5) of Homo sapiens (Human).